We begin with the raw amino-acid sequence, 514 residues long: 2,3-bisphosphoglycerate-independent phosphoglycerate mutase (514 aa).

Mn(2+)-binding residues include Asp14 and Ser64. Ser64 (phosphoserine intermediate) is an active-site residue. Substrate-binding positions include His125, 155-156 (RD), Arg187, Arg193, 263-266 (RADR), and Lys336. Mn(2+) is bound by residues Asp403, His407, Asp444, His445, and His463.

It belongs to the BPG-independent phosphoglycerate mutase family. As to quaternary structure, monomer. Requires Mn(2+) as cofactor.

The enzyme catalyses (2R)-2-phosphoglycerate = (2R)-3-phosphoglycerate. Its pathway is carbohydrate degradation; glycolysis; pyruvate from D-glyceraldehyde 3-phosphate: step 3/5. In terms of biological role, catalyzes the interconversion of 2-phosphoglycerate and 3-phosphoglycerate. This is 2,3-bisphosphoglycerate-independent phosphoglycerate mutase from Escherichia coli (strain ATCC 8739 / DSM 1576 / NBRC 3972 / NCIMB 8545 / WDCM 00012 / Crooks).